We begin with the raw amino-acid sequence, 329 residues long: GTP 3',8-cyclase (329 aa).

A Radical SAM core domain is found at 8 to 234 (AFARKFYYLR…QLRQRSDGPA (227 aa)). Position 17 (arginine 17) interacts with GTP. Residues cysteine 24 and cysteine 28 each coordinate [4Fe-4S] cluster. Tyrosine 30 is a binding site for S-adenosyl-L-methionine. [4Fe-4S] cluster is bound at residue cysteine 31. Arginine 68 is a binding site for GTP. An S-adenosyl-L-methionine-binding site is contributed by glycine 72. Threonine 99 is a binding site for GTP. Residue serine 123 coordinates S-adenosyl-L-methionine. Position 160 (lysine 160) interacts with GTP. Methionine 194 provides a ligand contact to S-adenosyl-L-methionine. Positions 257 and 260 each coordinate [4Fe-4S] cluster. Residue 262–264 (RLR) participates in GTP binding. Cysteine 274 contributes to the [4Fe-4S] cluster binding site.

This sequence belongs to the radical SAM superfamily. MoaA family. As to quaternary structure, monomer and homodimer. It depends on [4Fe-4S] cluster as a cofactor.

It catalyses the reaction GTP + AH2 + S-adenosyl-L-methionine = (8S)-3',8-cyclo-7,8-dihydroguanosine 5'-triphosphate + 5'-deoxyadenosine + L-methionine + A + H(+). It participates in cofactor biosynthesis; molybdopterin biosynthesis. Its function is as follows. Catalyzes the cyclization of GTP to (8S)-3',8-cyclo-7,8-dihydroguanosine 5'-triphosphate. In Shigella boydii serotype 18 (strain CDC 3083-94 / BS512), this protein is GTP 3',8-cyclase.